The chain runs to 304 residues: Glutaminase (304 aa).

Serine 63, asparagine 113, glutamate 157, asparagine 164, tyrosine 188, tyrosine 240, and valine 258 together coordinate substrate.

It belongs to the glutaminase family. Homotetramer.

It carries out the reaction L-glutamine + H2O = L-glutamate + NH4(+). This chain is Glutaminase, found in Christiangramia forsetii (strain DSM 17595 / CGMCC 1.15422 / KT0803) (Gramella forsetii).